We begin with the raw amino-acid sequence, 281 residues long: Acetyl-coenzyme A carboxylase carboxyl transferase subunit beta (281 aa).

Residues 23 to 281 (LWSKCEDCGA…KTLAMMRVEG (259 aa)) enclose the CoA carboxyltransferase N-terminal domain. Zn(2+)-binding residues include C27, C30, C46, and C49. Residues 27 to 49 (CEDCGAMLHRRQLEENLNTCNEC) form a C4-type zinc finger.

It belongs to the AccD/PCCB family. Acetyl-CoA carboxylase is a heterohexamer composed of biotin carboxyl carrier protein (AccB), biotin carboxylase (AccC) and two subunits each of ACCase subunit alpha (AccA) and ACCase subunit beta (AccD). The cofactor is Zn(2+).

It localises to the cytoplasm. The enzyme catalyses N(6)-carboxybiotinyl-L-lysyl-[protein] + acetyl-CoA = N(6)-biotinyl-L-lysyl-[protein] + malonyl-CoA. It functions in the pathway lipid metabolism; malonyl-CoA biosynthesis; malonyl-CoA from acetyl-CoA: step 1/1. In terms of biological role, component of the acetyl coenzyme A carboxylase (ACC) complex. Biotin carboxylase (BC) catalyzes the carboxylation of biotin on its carrier protein (BCCP) and then the CO(2) group is transferred by the transcarboxylase to acetyl-CoA to form malonyl-CoA. This is Acetyl-coenzyme A carboxylase carboxyl transferase subunit beta from Chlorobium luteolum (strain DSM 273 / BCRC 81028 / 2530) (Pelodictyon luteolum).